The chain runs to 334 residues: Glycerol-3-phosphate dehydrogenase [NAD(P)+] (334 aa).

Residues Ser14, Tyr15, Arg35, and Lys109 each contribute to the NADPH site. Sn-glycerol 3-phosphate contacts are provided by Lys109, Gly138, and Thr140. Position 142 (Ala142) interacts with NADPH. Lys194, Asp247, Ser257, Arg258, and Asn259 together coordinate sn-glycerol 3-phosphate. Residue Lys194 is the Proton acceptor of the active site. Arg258 provides a ligand contact to NADPH. NADPH-binding residues include Val282 and Glu284.

This sequence belongs to the NAD-dependent glycerol-3-phosphate dehydrogenase family.

Its subcellular location is the cytoplasm. The enzyme catalyses sn-glycerol 3-phosphate + NAD(+) = dihydroxyacetone phosphate + NADH + H(+). It carries out the reaction sn-glycerol 3-phosphate + NADP(+) = dihydroxyacetone phosphate + NADPH + H(+). Its pathway is membrane lipid metabolism; glycerophospholipid metabolism. Catalyzes the reduction of the glycolytic intermediate dihydroxyacetone phosphate (DHAP) to sn-glycerol 3-phosphate (G3P), the key precursor for phospholipid synthesis. This chain is Glycerol-3-phosphate dehydrogenase [NAD(P)+], found in Colwellia psychrerythraea (strain 34H / ATCC BAA-681) (Vibrio psychroerythus).